The chain runs to 291 residues: Nitrogenase iron protein 1 (291 aa).

An ATP-binding site is contributed by 10–17 (GKGGIGKS). Cys-98 is a [4Fe-4S] cluster binding site. Arg-101 is modified (ADP-ribosylarginine; by dinitrogenase reductase ADP-ribosyltransferase). A [4Fe-4S] cluster-binding site is contributed by Cys-133.

Belongs to the NifH/BchL/ChlL family. As to quaternary structure, homodimer. It depends on [4Fe-4S] cluster as a cofactor. Post-translationally, the reversible ADP-ribosylation of Arg-101 inactivates the nitrogenase reductase and regulates nitrogenase activity.

The catalysed reaction is N2 + 8 reduced [2Fe-2S]-[ferredoxin] + 16 ATP + 16 H2O = H2 + 8 oxidized [2Fe-2S]-[ferredoxin] + 2 NH4(+) + 16 ADP + 16 phosphate + 6 H(+). The key enzymatic reactions in nitrogen fixation are catalyzed by the nitrogenase complex, which has 2 components: the iron protein (component 2) and a component 1 which is either a molybdenum-iron protein, a vanadium-iron, or an iron-iron protein. The protein is Nitrogenase iron protein 1 (nifH1) of Azotobacter chroococcum mcd 1.